The sequence spans 197 residues: Glycerol-3-phosphate acyltransferase (197 aa).

The next 4 membrane-spanning stretches (helical) occupy residues 1 to 21 (MTAL…GLLV), 69 to 89 (LPML…AVVG), 110 to 130 (VMLF…LVVL), and 152 to 172 (VFFT…SFIF).

Belongs to the PlsY family. As to quaternary structure, probably interacts with PlsX.

The protein resides in the cell membrane. It carries out the reaction an acyl phosphate + sn-glycerol 3-phosphate = a 1-acyl-sn-glycero-3-phosphate + phosphate. Its pathway is lipid metabolism; phospholipid metabolism. Its function is as follows. Catalyzes the transfer of an acyl group from acyl-phosphate (acyl-PO(4)) to glycerol-3-phosphate (G3P) to form lysophosphatidic acid (LPA). This enzyme utilizes acyl-phosphate as fatty acyl donor, but not acyl-CoA or acyl-ACP. The protein is Glycerol-3-phosphate acyltransferase of Geobacillus kaustophilus (strain HTA426).